A 349-amino-acid polypeptide reads, in one-letter code: Acyl-CoA:acyl-CoA alkyltransferase (349 aa).

Catalysis depends on Glu97, which acts as the Proton acceptor. Residue Cys123 is the Acyl-thioester intermediate of the active site.

The protein belongs to the thiolase-like superfamily. OleA family.

The enzyme catalyses a 1,2-saturated acyl-CoA + an acyl-CoA + H2O = an (R)-2-alkyl-3-oxoalkanoate + 2 CoA + H(+). Involved in olefin biosynthesis. Catalyzes a non-decarboxylative head-to-head Claisen condensation of two acyl-CoA molecules, generating an (R)-2-alkyl-3-oxoalkanoate. The S.oneidensis oleABCD genes produce 3,6,9,12,15,19,22,25,28-hentriacontanonaene, which may aid the cells in adapting to a sudden drop in temperature. The polypeptide is Acyl-CoA:acyl-CoA alkyltransferase (Shewanella oneidensis (strain ATCC 700550 / JCM 31522 / CIP 106686 / LMG 19005 / NCIMB 14063 / MR-1)).